A 216-amino-acid chain; its full sequence is MTDHKPSKSLPKATAKRLPQYYRLFKSLVEENVTRTNSQLISEKIGVDAATIRRDFSLFGELGRRGYGYETKVLRDFFGELLGQDQETHIALIGVGNLGRALLHYQFQDRNKMRITQAYDISGNPLVGTQTDDGIPIYNISDLEKNVKKSDIKTAILSVRKENAQEVVDTLVKAGIKGFLNFAPIRLKVPSDVVVQSIDLTKELQTLLFFMGAQEE.

Residues 20–59 (QYYRLFKSLVEENVTRTNSQLISEKIGVDAATIRRDFSLF) constitute a DNA-binding region (H-T-H motif). An NAD(+)-binding site is contributed by 94–99 (GVGNLG).

This sequence belongs to the transcriptional regulatory Rex family. In terms of assembly, homodimer.

The protein resides in the cytoplasm. Its function is as follows. Modulates transcription in response to changes in cellular NADH/NAD(+) redox state. This Lactococcus lactis subsp. cremoris (Streptococcus cremoris) protein is Redox-sensing transcriptional repressor Rex.